We begin with the raw amino-acid sequence, 776 residues long: Protein SEY1 (776 aa).

Residues 1-681 (MADRSAIQLI…KRSIITTRTH (681 aa)) are Cytoplasmic-facing. The GB1/RHD3-type G domain occupies 34 to 263 (GLDYHVISVF…TENYYFKPQY (230 aa)). 44 to 51 (GSQSSGKS) lines the GTP pocket. A helical membrane pass occupies residues 682 to 702 (IPPWIYVLLAVLGWNEFVAVI). Topologically, residues 703–705 (RNP) are lumenal. Residues 706–726 (LFVTLTLILGATFFVIHKFGL) traverse the membrane as a helical segment. At 727–776 (WGPVVNVVQSAVGETRTAIKDKLRQFVVEDHEVKESFEMKDFSKNEQKEK) the chain is on the cytoplasmic side.

It belongs to the TRAFAC class dynamin-like GTPase superfamily. GB1/RHD3 GTPase family. RHD3 subfamily. Interacts with RTN1 and YOP1; GTP binding is not required for these interactions.

The protein localises to the endoplasmic reticulum membrane. Its function is as follows. Cooperates with the reticulon proteins RTN1 and RTN2 and the tubule-shaping DP1 family protein YOP1 to generate and maintain the structure of the tubular endoplasmic reticulum network. Has GTPase activity, which is required for its function in ER organization. This chain is Protein SEY1, found in Saccharomyces cerevisiae (strain AWRI1631) (Baker's yeast).